Consider the following 259-residue polypeptide: Chloroplastic import inner membrane translocase subunit HP30-2 (259 aa).

The next 4 helical transmembrane spans lie at 55-75 (AVVT…MGTL), 108-124 (NFAA…CVMK), 135-155 (AVVA…GLQG), and 158-178 (MNAI…FKLG).

Belongs to the Tim17/Tim22/Tim23 family. As to quaternary structure, probable component of a protein-conducting channel made of HP30-1, HP30-2 and HP20 that mediates the import of transit sequence-less proteins into the chloroplastic inner membrane. Interacts with CEQORH.

It localises to the mitochondrion membrane. The protein localises to the plastid. The protein resides in the chloroplast inner membrane. Functionally, together with HP30-1 and HP20, triggers the import and insertion of transit sequence-less multi-pass transmembrane proteins (e.g. CEQORH) into the chloroplastic inner membrane. The chain is Chloroplastic import inner membrane translocase subunit HP30-2 from Arabidopsis thaliana (Mouse-ear cress).